The chain runs to 275 residues: Adenosylcobinamide-GDP ribazoletransferase (275 aa).

Helical transmembrane passes span 53–73 (WFVF…TISL), 113–133 (VGSF…LGVS), 144–164 (LPFT…LYFV), 204–224 (FACI…PYFL), 225–245 (LSLL…KRWI), and 253–273 (LGAV…FVWI).

The protein belongs to the CobS family. The cofactor is Mg(2+).

The protein resides in the cell inner membrane. The enzyme catalyses alpha-ribazole + adenosylcob(III)inamide-GDP = adenosylcob(III)alamin + GMP + H(+). The catalysed reaction is alpha-ribazole 5'-phosphate + adenosylcob(III)inamide-GDP = adenosylcob(III)alamin 5'-phosphate + GMP + H(+). It functions in the pathway cofactor biosynthesis; adenosylcobalamin biosynthesis; adenosylcobalamin from cob(II)yrinate a,c-diamide: step 7/7. Joins adenosylcobinamide-GDP and alpha-ribazole to generate adenosylcobalamin (Ado-cobalamin). Also synthesizes adenosylcobalamin 5'-phosphate from adenosylcobinamide-GDP and alpha-ribazole 5'-phosphate. The protein is Adenosylcobinamide-GDP ribazoletransferase of Leptospira biflexa serovar Patoc (strain Patoc 1 / Ames).